The chain runs to 201 residues: Fas apoptotic inhibitory molecule 1 (201 aa).

It belongs to the FAIM1 family.

Its subcellular location is the cytoplasm. Its function is as follows. Plays a role as an inducible effector molecule that mediates Fas resistance produced by surface Ig engagement in B cells. The chain is Fas apoptotic inhibitory molecule 1 (FAIM) from Bos taurus (Bovine).